The primary structure comprises 210 residues: N-(5'-phosphoribosyl)anthranilate isomerase (210 aa).

This sequence belongs to the TrpF family.

The enzyme catalyses N-(5-phospho-beta-D-ribosyl)anthranilate = 1-(2-carboxyphenylamino)-1-deoxy-D-ribulose 5-phosphate. The protein operates within amino-acid biosynthesis; L-tryptophan biosynthesis; L-tryptophan from chorismate: step 3/5. The protein is N-(5'-phosphoribosyl)anthranilate isomerase (TRP1) of Eremothecium gossypii (strain ATCC 10895 / CBS 109.51 / FGSC 9923 / NRRL Y-1056) (Yeast).